Reading from the N-terminus, the 257-residue chain is MNLRDNLRRLLVRFYARRVEGHLDHDQVPKHIGVIMDGNRRWAKAAGSTTAQGHRAGADKIEEFLGWCSETDVGVVTLWLLSTDNFDRPQEELGPLLGIIEGVVRTLAADGRWRVHHVGTPDILPSQMQNALKEAEETTAHVDGILVNVAIGYGGRQEIADAVRSMLLDAHEKGTSIPDLADAVDVDLIGKHLYTGAQPDPDLVIRTSGEQRLSGFMLWQTAHSEYYFCEVFWPAFRKVDFLRALRDYAARHRRYGN.

The active site involves D37. D37 is a Mg(2+) binding site. Substrate is bound by residues 38-41 (GNRR), W42, H54, and 82-84 (STD). N85 (proton acceptor) is an active-site residue. Substrate-binding positions include F86, R88, R206, and 212 to 214 (RLS). E225 lines the Mg(2+) pocket.

Belongs to the UPP synthase family. As to quaternary structure, homodimer. The cofactor is Mg(2+).

Catalyzes the condensation of isopentenyl diphosphate (IPP) with allylic pyrophosphates generating different type of terpenoids. The sequence is that of Isoprenyl transferase 1 from Streptomyces avermitilis (strain ATCC 31267 / DSM 46492 / JCM 5070 / NBRC 14893 / NCIMB 12804 / NRRL 8165 / MA-4680).